The sequence spans 299 residues: Oxygen-dependent coproporphyrinogen-III oxidase (299 aa).

S92 lines the substrate pocket. A divalent metal cation contacts are provided by H96 and H106. The active-site Proton donor is the H106. Residue N108–R110 coordinates substrate. Residues H145 and H175 each contribute to the a divalent metal cation site. An important for dimerization region spans residues Y240–E275. A substrate-binding site is contributed by G258–R260.

It belongs to the aerobic coproporphyrinogen-III oxidase family. In terms of assembly, homodimer. It depends on a divalent metal cation as a cofactor.

The protein resides in the cytoplasm. The catalysed reaction is coproporphyrinogen III + O2 + 2 H(+) = protoporphyrinogen IX + 2 CO2 + 2 H2O. It functions in the pathway porphyrin-containing compound metabolism; protoporphyrin-IX biosynthesis; protoporphyrinogen-IX from coproporphyrinogen-III (O2 route): step 1/1. In terms of biological role, involved in the heme biosynthesis. Catalyzes the aerobic oxidative decarboxylation of propionate groups of rings A and B of coproporphyrinogen-III to yield the vinyl groups in protoporphyrinogen-IX. In Salmonella dublin (strain CT_02021853), this protein is Oxygen-dependent coproporphyrinogen-III oxidase.